The primary structure comprises 120 residues: MLLLYEYDIFWAFLIISSLIPILAFFLSGVLAPISKGPEKFSSYESGIEPIGDAWLQFRIRYYMFALVFVVFDVETVFLYPWSMSFDVLGVSVFIEAFIFVLILIVGLVYAWRKGALEWS.

Helical transmembrane passes span 9-29 (IFWA…FLSG), 62-82 (YYMF…LYPW), and 88-108 (VLGV…IVGL).

It belongs to the complex I subunit 3 family. In terms of assembly, NDH is composed of at least 16 different subunits, 5 of which are encoded in the nucleus.

The protein localises to the plastid. Its subcellular location is the chloroplast thylakoid membrane. It catalyses the reaction a plastoquinone + NADH + (n+1) H(+)(in) = a plastoquinol + NAD(+) + n H(+)(out). The enzyme catalyses a plastoquinone + NADPH + (n+1) H(+)(in) = a plastoquinol + NADP(+) + n H(+)(out). In terms of biological role, NDH shuttles electrons from NAD(P)H:plastoquinone, via FMN and iron-sulfur (Fe-S) centers, to quinones in the photosynthetic chain and possibly in a chloroplast respiratory chain. The immediate electron acceptor for the enzyme in this species is believed to be plastoquinone. Couples the redox reaction to proton translocation, and thus conserves the redox energy in a proton gradient. The protein is NAD(P)H-quinone oxidoreductase subunit 3, chloroplastic of Trachelium caeruleum (Blue throatwort).